The primary structure comprises 647 residues: Threonine--tRNA ligase (647 aa).

The TGS domain occupies methionine 1 to threonine 61. Residues aspartate 240–proline 538 are catalytic. The Zn(2+) site is built by cysteine 334, histidine 385, and histidine 515.

It belongs to the class-II aminoacyl-tRNA synthetase family. As to quaternary structure, homodimer. It depends on Zn(2+) as a cofactor.

The protein resides in the cytoplasm. The enzyme catalyses tRNA(Thr) + L-threonine + ATP = L-threonyl-tRNA(Thr) + AMP + diphosphate + H(+). Functionally, catalyzes the attachment of threonine to tRNA(Thr) in a two-step reaction: L-threonine is first activated by ATP to form Thr-AMP and then transferred to the acceptor end of tRNA(Thr). Also edits incorrectly charged L-seryl-tRNA(Thr). In Streptococcus pyogenes serotype M6 (strain ATCC BAA-946 / MGAS10394), this protein is Threonine--tRNA ligase.